Here is a 188-residue protein sequence, read N- to C-terminus: Elongation factor P (188 aa).

Lys-34 is subject to N6-(3,6-diaminohexanoyl)-5-hydroxylysine.

This sequence belongs to the elongation factor P family. May be beta-lysylated on the epsilon-amino group of Lys-34 by the combined action of EpmA and EpmB, and then hydroxylated on the C5 position of the same residue by EpmC (if this protein is present). Lysylation is critical for the stimulatory effect of EF-P on peptide-bond formation. The lysylation moiety may extend toward the peptidyltransferase center and stabilize the terminal 3-CCA end of the tRNA. Hydroxylation of the C5 position on Lys-34 may allow additional potential stabilizing hydrogen-bond interactions with the P-tRNA.

Its subcellular location is the cytoplasm. It functions in the pathway protein biosynthesis; polypeptide chain elongation. Functionally, involved in peptide bond synthesis. Alleviates ribosome stalling that occurs when 3 or more consecutive Pro residues or the sequence PPG is present in a protein, possibly by augmenting the peptidyl transferase activity of the ribosome. Modification of Lys-34 is required for alleviation. In Pectobacterium atrosepticum (strain SCRI 1043 / ATCC BAA-672) (Erwinia carotovora subsp. atroseptica), this protein is Elongation factor P.